Here is a 466-residue protein sequence, read N- to C-terminus: Uronate isomerase (466 aa).

Belongs to the metallo-dependent hydrolases superfamily. Uronate isomerase family.

The catalysed reaction is D-glucuronate = D-fructuronate. The enzyme catalyses aldehydo-D-galacturonate = keto-D-tagaturonate. Its pathway is carbohydrate metabolism; pentose and glucuronate interconversion. The sequence is that of Uronate isomerase from Clostridium perfringens (strain 13 / Type A).